The following is a 114-amino-acid chain: MAQGKGFGFGLGKIKELQEAFQKAQQVQEGAKVLQEELERMEIPGKSADGLVTVLMSGNQEPLSIEIDPSALEKGAEGLSASVTEAMKAAYAESTETMRSKMEELTSGLNLPGM.

It belongs to the YbaB/EbfC family. In terms of assembly, homodimer.

It is found in the cytoplasm. It localises to the nucleoid. Binds to DNA and alters its conformation. May be involved in regulation of gene expression, nucleoid organization and DNA protection. This chain is Nucleoid-associated protein slr1847, found in Synechocystis sp. (strain ATCC 27184 / PCC 6803 / Kazusa).